A 347-amino-acid chain; its full sequence is Coproporphyrinogen-III oxidase, aerobic 2 (347 aa).

A disordered region spans residues 1-31 (MGRHSDNSLQESANHTVLLTSPTNTIPKDSR). The segment covering 7 to 31 (NSLQESANHTVLLTSPTNTIPKDSR) has biased composition (polar residues). Residues 75 to 84 (VIREGRVFEQ) form an important for dimerization region. Ser-119 serves as a coordination point for substrate. The Proton donor role is filled by His-133. Residues 135 to 137 (NYR) and 305 to 310 (KGRTES) contribute to the substrate site. The segment at 287–322 (YVEFNLVYDRGTVFGLQTKGRTESILMSLPPLARWE) is important for dimerization.

It belongs to the aerobic coproporphyrinogen-III oxidase family. As to quaternary structure, homodimer.

Its subcellular location is the cytoplasm. It catalyses the reaction coproporphyrinogen III + O2 + 2 H(+) = protoporphyrinogen IX + 2 CO2 + 2 H2O. The protein operates within porphyrin-containing compound metabolism; protoporphyrin-IX biosynthesis; protoporphyrinogen-IX from coproporphyrinogen-III (O2 route): step 1/1. In terms of biological role, key enzyme in heme biosynthesis. Catalyzes the oxidative decarboxylation of propionic acid side chains of rings A and B of coproporphyrinogen III. This Nostoc sp. (strain PCC 7120 / SAG 25.82 / UTEX 2576) protein is Coproporphyrinogen-III oxidase, aerobic 2.